Consider the following 162-residue polypeptide: NADH-quinone oxidoreductase subunit I (162 aa).

2 4Fe-4S ferredoxin-type domains span residues 52–82 and 93–122; these read LRRY…IEAG and TRYD…EGPN. Residues Cys-62, Cys-65, Cys-68, Cys-72, Cys-102, Cys-105, Cys-108, and Cys-112 each coordinate [4Fe-4S] cluster.

This sequence belongs to the complex I 23 kDa subunit family. NDH-1 is composed of 14 different subunits. Subunits NuoA, H, J, K, L, M, N constitute the membrane sector of the complex. The cofactor is [4Fe-4S] cluster.

The protein localises to the cell inner membrane. The catalysed reaction is a quinone + NADH + 5 H(+)(in) = a quinol + NAD(+) + 4 H(+)(out). In terms of biological role, NDH-1 shuttles electrons from NADH, via FMN and iron-sulfur (Fe-S) centers, to quinones in the respiratory chain. The immediate electron acceptor for the enzyme in this species is believed to be ubiquinone. Couples the redox reaction to proton translocation (for every two electrons transferred, four hydrogen ions are translocated across the cytoplasmic membrane), and thus conserves the redox energy in a proton gradient. This is NADH-quinone oxidoreductase subunit I from Methylobacterium nodulans (strain LMG 21967 / CNCM I-2342 / ORS 2060).